The primary structure comprises 738 residues: Multifunctional procollagen lysine hydroxylase and glycosyltransferase LH3 (738 aa).

Residues 1 to 24 form the signal peptide; it reads MTSSGPGPRFLLLLPLLLPPAASA. The tract at residues 25–290 is required for glycosyltransferase activity; the sequence is SDRPRGRDPV…FCNQDRRTLP (266 aa). Residue 44–46 coordinates UDP; that stretch reads VAT. Asparagine 63 carries N-linked (GlcNAc...) asparagine glycosylation. 3 residues coordinate Mn(2+): aspartate 112, aspartate 115, and histidine 253. Position 112–114 (112–114) interacts with UDP; it reads DSY. Residue 256-259 participates in UDP binding; that stretch reads GPTK. Disulfide bonds link cysteine 279–cysteine 282 and cysteine 379–cysteine 385. The tract at residues 295 to 520 is accessory region; that stretch reads PPRVFLAVFV…EFGRLLATSR (226 aa). An N-linked (GlcNAc...) asparagine glycan is attached at asparagine 548. Cysteine 563 and cysteine 698 are disulfide-bonded. Positions 599 and 656 each coordinate 2-oxoglutarate. The region spanning 647–738 is the Fe2OG dioxygenase domain; sequence RAVMNFVVRY…RYIMVSFVDP (92 aa). Fe cation contacts are provided by histidine 667 and aspartate 669. Residues 672–715 form an important for dimerization region; the sequence is TFTLNVALNHKGLDYEGGGCRFLRYDCVISSPRKGWALLHPGRL. A 2-oxoglutarate-binding site is contributed by asparagine 676. Residue histidine 719 coordinates Fe cation. Arginine 729 contacts 2-oxoglutarate.

Homodimer. The cofactor is Fe(2+). Requires L-ascorbate as cofactor. It depends on Mn(2+) as a cofactor.

The protein resides in the rough endoplasmic reticulum. Its subcellular location is the endoplasmic reticulum lumen. It localises to the endoplasmic reticulum membrane. It is found in the secreted. The protein localises to the extracellular space. It carries out the reaction L-lysyl-[collagen] + 2-oxoglutarate + O2 = (5R)-5-hydroxy-L-lysyl-[collagen] + succinate + CO2. The enzyme catalyses (5R)-5-hydroxy-L-lysyl-[collagen] + UDP-alpha-D-galactose = (5R)-5-O-(beta-D-galactosyl)-5-hydroxy-L-lysyl-[collagen] + UDP + H(+). The catalysed reaction is (5R)-5-O-(beta-D-galactosyl)-5-hydroxy-L-lysyl-[collagen] + UDP-alpha-D-glucose = (5R)-5-O-[alpha-D-glucosyl-(1-&gt;2)-beta-D-galactosyl]-5-hydroxy-L-lysyl-[collagen] + UDP + H(+). Its function is as follows. Multifunctional enzyme that catalyzes a series of post-translational modifications on Lys residues in procollagen. Plays a redundant role in catalyzing the formation of hydroxylysine residues in -Xaa-Lys-Gly- sequences in collagens. Plays a redundant role in catalyzing the transfer of galactose onto hydroxylysine groups, giving rise to galactosyl 5-hydroxylysine. Has an essential role by catalyzing the subsequent transfer of glucose moieties, giving rise to 1,2-glucosylgalactosyl-5-hydroxylysine residues. Catalyzes hydroxylation and glycosylation of Lys residues in the MBL1 collagen-like domain, giving rise to hydroxylysine and 1,2-glucosylgalactosyl-5-hydroxylysine residues. Catalyzes hydroxylation and glycosylation of Lys residues in the ADIPOQ collagen-like domain, giving rise to hydroxylysine and 1,2-glucosylgalactosyl-5-hydroxylysine residues. Essential for normal biosynthesis and secretion of type IV collagens. Essential for normal formation of basement membranes. In Pongo abelii (Sumatran orangutan), this protein is Multifunctional procollagen lysine hydroxylase and glycosyltransferase LH3 (PLOD3).